A 196-amino-acid chain; its full sequence is Small heat shock protein C3 (196 aa).

A sHSP domain is found at 88-196 (SAYSSSAIRT…EKDAKEIPIQ (109 aa)).

Belongs to the small heat shock protein (HSP20) family.

The chain is Small heat shock protein C3 (hspc3-1) from Rickettsia felis (strain ATCC VR-1525 / URRWXCal2) (Rickettsia azadi).